A 571-amino-acid chain; its full sequence is Proline--tRNA ligase (571 aa).

Belongs to the class-II aminoacyl-tRNA synthetase family. ProS type 1 subfamily. Homodimer.

The protein localises to the cytoplasm. The enzyme catalyses tRNA(Pro) + L-proline + ATP = L-prolyl-tRNA(Pro) + AMP + diphosphate. Functionally, catalyzes the attachment of proline to tRNA(Pro) in a two-step reaction: proline is first activated by ATP to form Pro-AMP and then transferred to the acceptor end of tRNA(Pro). As ProRS can inadvertently accommodate and process non-cognate amino acids such as alanine and cysteine, to avoid such errors it has two additional distinct editing activities against alanine. One activity is designated as 'pretransfer' editing and involves the tRNA(Pro)-independent hydrolysis of activated Ala-AMP. The other activity is designated 'posttransfer' editing and involves deacylation of mischarged Ala-tRNA(Pro). The misacylated Cys-tRNA(Pro) is not edited by ProRS. The protein is Proline--tRNA ligase of Acinetobacter baumannii (strain AB307-0294).